A 389-amino-acid polypeptide reads, in one-letter code: Large envelope protein (389 aa).

Met1 bears the N-acetylmethionine mark. Residue Gly2 is the site of N-myristoyl glycine; by host attachment. The tract at residues 2–108 (GQNLSTSNPL…PPLRDTHPQA (107 aa)) is pre-S1. Residues 2–163 (GQNLSTSNPL…FSTTGDPAPN (162 aa)) form a pre-S region. The Virion surface; in external conformation portion of the chain corresponds to 2 to 170 (GQNLSTSNPL…APNMENITSG (169 aa)). The Intravirion; in internal conformation segment spans residues 2–242 (GQNLSTSNPL…PGYRWMCLRR (241 aa)). The interval 75-107 (TTLPANPPPASTNRQSGRQPTPLSPPLRDTHPQ) is disordered. The span at 85 to 95 (STNRQSGRQPT) shows a compositional bias: polar residues. The tract at residues 109–163 (MQWNSTTFHQALQDPRVRGLYFPAGGSSSGTLNPVPNTASHISSVFSTTGDPAPN) is pre-S2. The chain crosses the membrane as a helical span at residues 171 to 191 (FLGPLLVLQAGFFLLTKILTI). Topologically, residues 192 to 242 (PQSLDSWWTSLNFLGGAPVCLGQNSQSPTSNHSPTSCPPICPGYRWMCLRR) are intravirion; in external conformation. The helical transmembrane segment at 243-263 (FIIFLFILLLCLIFLLVLLDY) threads the bilayer. The Virion surface portion of the chain corresponds to 264–337 (QGMLPVCPLI…WASVRFSWLS (74 aa)). The N-linked (GlcNAc...) asparagine; by host glycan is linked to Asn309. A helical transmembrane segment spans residues 338-358 (LLAPFVQWFAGLSPTVWLLAI). The Intravirion portion of the chain corresponds to 359–364 (WMMWYW). The helical transmembrane segment at 365-387 (GPNLYNILSPFIPLLPIFFCLWV) threads the bilayer. The Virion surface portion of the chain corresponds to 388 to 389 (YI).

The protein belongs to the orthohepadnavirus major surface antigen family. In its internal form (Li-HBsAg), interacts with the capsid protein and with the isoform S. Interacts with host chaperone CANX. In terms of assembly, associates with host chaperone CANX through its pre-S2 N glycan; this association may be essential for isoform M proper secretion. As to quaternary structure, interacts with isoform L. Interacts with the antigens of satellite virus HDV (HDVAgs); this interaction is required for encapsidation of HDV genomic RNA. In terms of processing, isoform M is N-terminally acetylated by host at a ratio of 90%, and N-glycosylated by host at the pre-S2 region. Myristoylated.

It is found in the virion membrane. Its function is as follows. The large envelope protein exists in two topological conformations, one which is termed 'external' or Le-HBsAg and the other 'internal' or Li-HBsAg. In its external conformation the protein attaches the virus to cell receptors and thereby initiating infection. This interaction determines the species specificity and liver tropism. This attachment induces virion internalization predominantly through caveolin-mediated endocytosis. The large envelope protein also assures fusion between virion membrane and endosomal membrane. In its internal conformation the protein plays a role in virion morphogenesis and mediates the contact with the nucleocapsid like a matrix protein. The middle envelope protein plays an important role in the budding of the virion. It is involved in the induction of budding in a nucleocapsid independent way. In this process the majority of envelope proteins bud to form subviral lipoprotein particles of 22 nm of diameter that do not contain a nucleocapsid. The sequence is that of Large envelope protein from Pan troglodytes (Chimpanzee).